We begin with the raw amino-acid sequence, 578 residues long: Protein LIKE EARLY STARVATION, chloroplastic (578 aa).

Residues 1–56 (MALRLGVSIGAALGSSHWDDGQRVRQRDFSASVNFTAPVTSRRSLRGSRTGVRILR) constitute a chloroplast transit peptide. Disordered stretches follow at residues 146-166 (NNSG…TSEV) and 187-206 (SETS…TPPQ).

The protein belongs to the ESV1 family. As to expression, expressed ubiquitously.

The protein resides in the plastid. The protein localises to the chloroplast stroma. Functionally, binds preferentially to highly ordered alpha-glucans, such as starch and crystalline maltodextrins. Involved in the organization of the starch granule matrix, thus influencing starch turnover by modulating the accessibility of starch polymers to modifying and degrading enzymes involved in phosphorylation, hydrolyzes and synthesis, including starch synthases (SSI and SSIII), starch phosphorylases (PHS1), isoamylase, beta-amylase, glucan water dikinase (GWD) and phosphoglucan water dikinase (PWD). The chain is Protein LIKE EARLY STARVATION, chloroplastic from Arabidopsis thaliana (Mouse-ear cress).